Here is a 1295-residue protein sequence, read N- to C-terminus: Phosphoribosylformylglycinamidine synthase (1295 aa).

The disordered stretch occupies residues 305 to 327; the sequence is WPGAATGSGGEIRDEGATGRGAK. ATP is bound by residues 307–318 and alanine 678; that span reads GAATGSGGEIRD. Residues glutamate 718, asparagine 722, and aspartate 884 each contribute to the Mg(2+) site. Position 886 (serine 886) interacts with ATP. Positions 1042–1295 constitute a Glutamine amidotransferase type-1 domain; the sequence is VAVLREQGVN…IFRNARKQLG (254 aa). Cysteine 1135 serves as the catalytic Nucleophile. Residues histidine 1260 and glutamate 1262 contribute to the active site.

The protein in the N-terminal section; belongs to the FGAMS family. As to quaternary structure, monomer.

The protein resides in the cytoplasm. It carries out the reaction N(2)-formyl-N(1)-(5-phospho-beta-D-ribosyl)glycinamide + L-glutamine + ATP + H2O = 2-formamido-N(1)-(5-O-phospho-beta-D-ribosyl)acetamidine + L-glutamate + ADP + phosphate + H(+). It participates in purine metabolism; IMP biosynthesis via de novo pathway; 5-amino-1-(5-phospho-D-ribosyl)imidazole from N(2)-formyl-N(1)-(5-phospho-D-ribosyl)glycinamide: step 1/2. Functionally, phosphoribosylformylglycinamidine synthase involved in the purines biosynthetic pathway. Catalyzes the ATP-dependent conversion of formylglycinamide ribonucleotide (FGAR) and glutamine to yield formylglycinamidine ribonucleotide (FGAM) and glutamate. The chain is Phosphoribosylformylglycinamidine synthase from Escherichia coli O6:K15:H31 (strain 536 / UPEC).